The chain runs to 1170 residues: Protein SCAR4 (1170 aa).

7 disordered regions span residues 180 to 207, 356 to 376, 631 to 674, 701 to 742, 783 to 819, 960 to 980, and 1026 to 1046; these read KLGK…EDSR, NDAD…SDDK, AAPK…PRDL, SYSG…NQTG, NQRQ…SSPL, EESK…SDTY, and HNNP…HPLE. Basic residues predominate over residues 183-195; that stretch reads KDKRLRQSKKKGS. The span at 198 to 207 shows a compositional bias: basic and acidic residues; it reads TIKETPEDSR. Polar residues predominate over residues 356–365; that stretch reads NDADSPASTE. Residues 366 to 376 show a composition bias toward basic and acidic residues; it reads SEVKEAGSDDK. Polar residues-rich tracts occupy residues 640–668, 701–716, 783–818, and 967–980; these read SQDG…TLMS, SYSG…IVSD, NQRQ…QSSP, and EQSP…SDTY. In terms of domain architecture, WH2 spans 1105–1123; sequence ENDSLLEIIRSKSFNLRPA.

It belongs to the SCAR/WAVE family. In terms of assembly, interacts with SPK1. In terms of tissue distribution, expressed in expanding cotyledons, expanding leaves and expanding siliques containing developing embryos. Detected in unopened flower buds and in the expanding tip region of roots. Reduced expression in mature leaves.

The protein localises to the cytoplasm. It localises to the cytoskeleton. Involved in regulation of actin and microtubule organization. Part of a WAVE complex that activates the Arp2/3 complex. Regulates trichome branch positioning and expansion. This is Protein SCAR4 (SCAR4) from Arabidopsis thaliana (Mouse-ear cress).